Here is a 428-residue protein sequence, read N- to C-terminus: Dihydroorotase (428 aa).

The Zn(2+) site is built by His59 and His61. Substrate contacts are provided by residues 61 to 63 and Asn93; that span reads HLR. 3 residues coordinate Zn(2+): Asp151, His178, and His231. Asn277 contacts substrate. Zn(2+) is bound at residue Asp304. Residue Asp304 is part of the active site. Substrate contacts are provided by residues His308 and 322-323; that span reads FG.

The protein belongs to the metallo-dependent hydrolases superfamily. DHOase family. Class I DHOase subfamily. Requires Zn(2+) as cofactor.

The enzyme catalyses (S)-dihydroorotate + H2O = N-carbamoyl-L-aspartate + H(+). It participates in pyrimidine metabolism; UMP biosynthesis via de novo pathway; (S)-dihydroorotate from bicarbonate: step 3/3. In terms of biological role, catalyzes the reversible cyclization of carbamoyl aspartate to dihydroorotate. This is Dihydroorotase from Bacillus cereus (strain AH187).